We begin with the raw amino-acid sequence, 341 residues long: MSKSGVLLLNLGGPETQADVQPFLYNLFADPELIRLPFPFLQRAFAWAISTLRAPKSRRNYAAIGGGSPLRRITAAQAQALQAQLVAAGYDVPVYVAMRYWHPLIESVVQQIKSDGITRLVVLPLYPQYSISTTGSSFKLLDRLWAEDPELARIERRQICSWYDQPQYVQAMARAIREQLDAFEDPAGVHVLFSAHGIPESYVTQAGDPYQQEMEACVQLIWREVGRPNRHTLSYQSRVGSVRWLQPYTETVIPELGACGVRQLLVVPISFVSEHIETLQEIDIEYRELAHQAGIREFRRVPALNADPLFIAGLVALVRPHLLTSAPAFVPAAVGGSLLER.

2 residues coordinate Fe cation: H196 and E277.

It belongs to the ferrochelatase family.

Its subcellular location is the cytoplasm. The enzyme catalyses heme b + 2 H(+) = protoporphyrin IX + Fe(2+). Its pathway is porphyrin-containing compound metabolism; protoheme biosynthesis; protoheme from protoporphyrin-IX: step 1/1. Functionally, catalyzes the ferrous insertion into protoporphyrin IX. The protein is Ferrochelatase of Synechococcus sp. (strain JA-3-3Ab) (Cyanobacteria bacterium Yellowstone A-Prime).